The following is a 1090-amino-acid chain: ATP-dependent helicase/deoxyribonuclease subunit B (1090 aa).

Residue 7 to 14 (GPVGSGKS) coordinates ATP. The [4Fe-4S] cluster site is built by cysteine 719, cysteine 1035, cysteine 1038, and cysteine 1044.

Belongs to the helicase family. AddB/RexB type 1 subfamily. As to quaternary structure, heterodimer of AddA and AddB. Requires Mg(2+) as cofactor. [4Fe-4S] cluster serves as cofactor.

Functionally, the heterodimer acts as both an ATP-dependent DNA helicase and an ATP-dependent, dual-direction single-stranded exonuclease. Recognizes the chi site generating a DNA molecule suitable for the initiation of homologous recombination. The AddB subunit has 5' -&gt; 3' nuclease activity but not helicase activity. This Carboxydothermus hydrogenoformans (strain ATCC BAA-161 / DSM 6008 / Z-2901) protein is ATP-dependent helicase/deoxyribonuclease subunit B.